The following is a 136-amino-acid chain: Urease subunit beta (136 aa).

The interval 113 to 136 (NDEYAGVFGDNGAENVNKKGRKRS) is disordered.

It belongs to the urease beta subunit family. In terms of assembly, heterotrimer of UreA (gamma), UreB (beta) and UreC (alpha) subunits. Three heterotrimers associate to form the active enzyme.

Its subcellular location is the cytoplasm. The enzyme catalyses urea + 2 H2O + H(+) = hydrogencarbonate + 2 NH4(+). It functions in the pathway nitrogen metabolism; urea degradation; CO(2) and NH(3) from urea (urease route): step 1/1. In Staphylococcus aureus (strain Newman), this protein is Urease subunit beta.